A 148-amino-acid chain; its full sequence is Snaclec B9 (148 aa).

Residues 1–24 (MGRFIFVSFGLLVVFLSLSGTGAA) form the signal peptide. 3 disulfides stabilise this stretch: cysteine 27–cysteine 38, cysteine 55–cysteine 144, and cysteine 121–cysteine 136. One can recognise a C-type lectin domain in the interval 34-145 (YDQHCYKVFD…CRLLGHFVCK (112 aa)). Residues asparagine 57 and asparagine 60 are each glycosylated (N-linked (GlcNAc...) asparagine).

This sequence belongs to the snaclec family. In terms of assembly, heterodimer; disulfide-linked. Expressed by the venom gland.

It localises to the secreted. Functionally, interferes with one step of hemostasis (modulation of platelet aggregation, or coagulation cascade, for example). The protein is Snaclec B9 of Macrovipera lebetinus (Levantine viper).